Here is a 93-residue protein sequence, read N- to C-terminus: MRTVPLFAACLLLTLMAQAEPLPRAADHSDTKMKGDREDHVAVISFWEEESTSLEDAGAGAGRRCICTTRTCRFPYRRLGTCIFQNRVYTFCC.

The first 19 residues, 1–19 (MRTVPLFAACLLLTLMAQA), serve as a signal peptide directing secretion. Positions 20–62 (EPLPRAADHSDTKMKGDREDHVAVISFWEEESTSLEDAGAGAG) are excised as a propeptide. Intrachain disulfides connect Cys65/Cys93, Cys67/Cys82, and Cys72/Cys92.

It belongs to the alpha-defensin family.

Its subcellular location is the secreted. Its function is as follows. Has antibiotic, anti-fungi and antiviral activity. This is Neutrophil cationic peptide 1 type A from Cavia porcellus (Guinea pig).